The following is an 832-amino-acid chain: Receptor-interacting serine/threonine-protein kinase 4 (832 aa).

Residues 22-286 form the Protein kinase domain; sequence FTGWEKVGSG…QGNGLNGELI (265 aa). Residues 28–36 and K51 each bind ATP; that span reads VGSGGFGQV. Residue K51 forms a Glycyl lysine isopeptide (Lys-Gly) (interchain with G-Cter in ubiquitin) linkage. The active-site Proton acceptor is the D143. K145 is covalently cross-linked (Glycyl lysine isopeptide (Lys-Gly) (interchain with G-Cter in ubiquitin)). Disordered stretches follow at residues 325 to 368 and 389 to 424; these read QEIT…RLKR and SGVSQAVEGPEELSRSSSESKLPSSGSGKRLSGVSS. Residues 329–342 show a composition bias toward acidic residues; that stretch reads SETEDLCEKPDDEV. Over residues 343–359 the composition is skewed to basic and acidic residues; it reads KETAHDLDVKSPPEPRS. Residues 403 to 424 are compositionally biased toward low complexity; that stretch reads RSSSESKLPSSGSGKRLSGVSS. ANK repeat units lie at residues 485–514, 518–547, 551–580, 584–613, 617–647, 651–680, 684–713, 717–746, 750–780, and 782–811; these read SGASLLHLAVEAGQEECAKWLLLNNANPNL, RGSTPLHMAVERRVRGVVELLLARKISVNA, DQWTALHFAAQNGDESSTRLLLEKNASVNE, EGRTPMHVACQHGQENIVRILLRRGVDVSL, DAWLPLHYAAWQGHLPIVKLLAKQPGVSVNA, DGRTPLHLAAQRGHYRVARILIDLCSDVNV, LAQTPLHVAAETGHTSTARLLLHRGAGKEA, DGYTALHLAARNGHLATVKLLVEEKADVLA, LNQTALHLAAAHGHSEVVEELVSADVIDLFD, and QGLSALHLAAQGRHAQTVETLLRHGAHINL.

The protein belongs to the protein kinase superfamily. TKL Ser/Thr protein kinase family. Interacts with PRKCB. Interacts with TRAF1, TRAF2, TRAF3 and TRAF5. Interacts with BIRC2/c-IAP1, BIRC3/c-IAP2 and XIAP/BIRC4. Post-translationally, may be phosphorylated by MAP3K2 and MAP3K3. In terms of processing, proteolytically cleaved by during Fas-induced apoptosis. Cleavage at Asp-388 and Asp-426. Polyubiquitinated with 'Lys-48' and 'Lys-63'-linked chains by BIRC2/c-IAP1 and BIRC3/c-IAP2, leading to activation of NF-kappa-B. As to expression, expressed in hair follicles and skin.

The protein localises to the cytoplasm. Its subcellular location is the membrane. The enzyme catalyses L-seryl-[protein] + ATP = O-phospho-L-seryl-[protein] + ADP + H(+). It catalyses the reaction L-threonyl-[protein] + ATP = O-phospho-L-threonyl-[protein] + ADP + H(+). Functionally, serine/threonine protein kinase. Required for embryonic skin development and correct skin homeostasis in adults, via phosphorylation of PKP1 and subsequent promotion of keratinocyte differentiation and cell adhesion. It is a direct transcriptional target of TP63. Plays a role in NF-kappa-B activation. This is Receptor-interacting serine/threonine-protein kinase 4 (RIPK4) from Homo sapiens (Human).